We begin with the raw amino-acid sequence, 718 residues long: Methionine--tRNA ligase (718 aa).

The 'HIGH' region signature appears at 27 to 37; the sequence is PYANGQIHIGH. Zn(2+)-binding residues include C158, C161, C171, and C174. Residues 348–352 carry the 'KMSKS' region motif; the sequence is KMSKS. K351 is a binding site for ATP. The tRNA-binding domain occupies 612-718; sequence DFAKIDLRIA…SGAKPGMRVK (107 aa).

This sequence belongs to the class-I aminoacyl-tRNA synthetase family. MetG type 1 subfamily. In terms of assembly, homodimer. Zn(2+) serves as cofactor.

The protein localises to the cytoplasm. The enzyme catalyses tRNA(Met) + L-methionine + ATP = L-methionyl-tRNA(Met) + AMP + diphosphate. Functionally, is required not only for elongation of protein synthesis but also for the initiation of all mRNA translation through initiator tRNA(fMet) aminoacylation. This Burkholderia orbicola (strain AU 1054) protein is Methionine--tRNA ligase.